The sequence spans 151 residues: Probable cGMP 3',5'-cyclic phosphodiesterase subunit delta (151 aa).

This sequence belongs to the PDE6D/unc-119 family. In terms of assembly, interacts with Pde6.

The protein localises to the nucleus. It localises to the cytoplasm. The sequence is that of Probable cGMP 3',5'-cyclic phosphodiesterase subunit delta from Drosophila persimilis (Fruit fly).